We begin with the raw amino-acid sequence, 158 residues long: Snaclec agglucetin subunit alpha-2 (158 aa).

Residues 1 to 23 (MGRFIFVSFGLLVVFLSLSGTGA) form the signal peptide. 3 disulfide bridges follow: Cys-27/Cys-38, Cys-55/Cys-152, and Cys-127/Cys-144. A C-type lectin domain is found at 34 to 153 (YDQYCYQVIK…CIQLNPFVCK (120 aa)).

Belongs to the snaclec family. As to quaternary structure, heterotetramer of the subunits alpha-1, alpha-2, beta-1 and beta-2; disulfide-linked. In terms of tissue distribution, expressed by the venom gland.

It localises to the secreted. Its function is as follows. Agglucetin specifically causes platelet aggregation and surface exposure of integrin alpha-IIb/beta-3 with a GPIb-(GP1BA-) dependent manner in washed platelets. It binds to human platelets in a saturable manner, and its binding is specifically blocked by anti-GP Ib mAb. It regulates endothelial cell survival and promotes angiogenesis by activating integrin alpha-v/beta-3 signaling through FAK/phosphatidylinositol 3-kinase (PI3K)/Akt pathway. The chain is Snaclec agglucetin subunit alpha-2 from Deinagkistrodon acutus (Hundred-pace snake).